Reading from the N-terminus, the 94-residue chain is Co-chaperonin GroES (94 aa).

It belongs to the GroES chaperonin family. As to quaternary structure, heptamer of 7 subunits arranged in a ring. Interacts with the chaperonin GroEL.

The protein localises to the cytoplasm. Together with the chaperonin GroEL, plays an essential role in assisting protein folding. The GroEL-GroES system forms a nano-cage that allows encapsulation of the non-native substrate proteins and provides a physical environment optimized to promote and accelerate protein folding. GroES binds to the apical surface of the GroEL ring, thereby capping the opening of the GroEL channel. The polypeptide is Co-chaperonin GroES (Bacillus licheniformis (strain ATCC 14580 / DSM 13 / JCM 2505 / CCUG 7422 / NBRC 12200 / NCIMB 9375 / NCTC 10341 / NRRL NRS-1264 / Gibson 46)).